The sequence spans 553 residues: LIM domain-containing protein B (553 aa).

The tract at residues 43-115 (LTYKDPNVST…SINNNISNNN (73 aa)) is disordered. Residues 99 to 114 (GPGLPNNSINNNISNN) are compositionally biased toward low complexity. 5 consecutive LIM zinc-binding domains span residues 205–262 (PICG…ELFS), 263–322 (PRCF…RQKR), 328–387 (EICS…KQIL), 388–447 (NICG…FFGR), and 448–505 (QCFK…LPKE). A disordered region spans residues 534-553 (ELKKERERAAKEKEKESKAK).

It is found in the cytoplasm. The protein resides in the cell cortex. The protein localises to the cytoskeleton. Functionally, regulates and controls rearrangements of the actin cytoskeleton. Required for tip formation, morphogenesis, cell adhesion and motility, chemotaxis and aggregates formation. May function downstream of paxB. In Dictyostelium discoideum (Social amoeba), this protein is LIM domain-containing protein B (limB).